A 92-amino-acid polypeptide reads, in one-letter code: YcgL domain-containing protein Shewmr7_2249 (92 aa).

Residues 1 to 85 (MLCAVYKSSR…PQVNLLAEHR (85 aa)) form the YcgL domain.

This chain is YcgL domain-containing protein Shewmr7_2249, found in Shewanella sp. (strain MR-7).